The following is a 178-amino-acid chain: Large ribosomal subunit protein uL6 (178 aa).

It belongs to the universal ribosomal protein uL6 family. In terms of assembly, part of the 50S ribosomal subunit.

This protein binds to the 23S rRNA, and is important in its secondary structure. It is located near the subunit interface in the base of the L7/L12 stalk, and near the tRNA binding site of the peptidyltransferase center. The protein is Large ribosomal subunit protein uL6 of Desulfatibacillum aliphaticivorans.